Consider the following 269-residue polypeptide: Interleukin-1 beta (269 aa).

A propeptide spanning residues 1 to 116 (MAEVPELASE…TRNNDACVHD (116 aa)) is cleaved from the precursor.

This sequence belongs to the IL-1 family. In terms of assembly, monomer. In its precursor form, weakly interacts with full-length MEFV; the mature cytokine does not interact at all. Interacts with integrins ITGAV:ITGBV and ITGA5:ITGB1; integrin-binding is required for IL1B signaling. Interacts with cargo receptor TMED10; the interaction is direct and is required for the secretion of IL1B mature form. Interacts with HSP90AB1; the interaction facilitates cargo translocation into the ERGIC. Interacts with HSP90B1; the interaction facilitates cargo translocation into the ERGIC.

The protein resides in the cytoplasm. Its subcellular location is the cytosol. It localises to the secreted. It is found in the lysosome. The protein localises to the extracellular exosome. Potent pro-inflammatory cytokine. Initially discovered as the major endogenous pyrogen, induces prostaglandin synthesis, neutrophil influx and activation, T-cell activation and cytokine production, B-cell activation and antibody production, and fibroblast proliferation and collagen production. Promotes Th17 differentiation of T-cells. Synergizes with IL12/interleukin-12 to induce IFNG synthesis from T-helper 1 (Th1) cells. Plays a role in angiogenesis by inducing VEGF production synergistically with TNF and IL6. Involved in transduction of inflammation downstream of pyroptosis: its mature form is specifically released in the extracellular milieu by passing through the gasdermin-D (GSDMD) pore. This Macaca nemestrina (Pig-tailed macaque) protein is Interleukin-1 beta (IL1B).